The sequence spans 85 residues: Scratcher peptide (85 aa).

The first 24 residues, 1-24, serve as a signal peptide directing secretion; it reads MTSVQSVTCCCLLWLMLSVQPITP. Positions 25–38 are excised as a propeptide; sequence GSPGPAQLSRERSF. 4-carboxyglutamate is present on Glu-47. Aspartic acid 1-amide is present on Asp-67. Residues 68–85 constitute a propeptide that is removed on maturation; the sequence is KRDVVSPRIRRRKRSKAM.

The protein belongs to the conotoxin J superfamily. In terms of processing, contains 2 disulfide bonds. Expressed by the venom duct.

The protein resides in the secreted. Functionally, causes scratching in mice. The sequence is that of Scratcher peptide from Conus geographus (Geography cone).